A 245-amino-acid chain; its full sequence is 5-oxoprolinase subunit A (245 aa).

Belongs to the LamB/PxpA family. As to quaternary structure, forms a complex composed of PxpA, PxpB and PxpC.

The catalysed reaction is 5-oxo-L-proline + ATP + 2 H2O = L-glutamate + ADP + phosphate + H(+). Catalyzes the cleavage of 5-oxoproline to form L-glutamate coupled to the hydrolysis of ATP to ADP and inorganic phosphate. This Neisseria meningitidis serogroup C (strain 053442) protein is 5-oxoprolinase subunit A.